A 415-amino-acid polypeptide reads, in one-letter code: Coenzyme F420 hydrogenase subunit alpha (415 aa).

Cys68, Cys71, Cys391, and Cys394 together coordinate Ni(2+).

It belongs to the [NiFe]/[NiFeSe] hydrogenase large subunit family. As to quaternary structure, heterocomplex of the form (alpha(1)beta(1)gamma(1))(8). The cofactor is Ni(2+). Requires iron-sulfur cluster as cofactor. FAD serves as cofactor.

The enzyme catalyses oxidized coenzyme F420-(gamma-L-Glu)(n) + H2 + H(+) = reduced coenzyme F420-(gamma-L-Glu)(n). In terms of biological role, reduces the physiological low-potential two-electron acceptor coenzyme F420, and the artificial one-electron acceptor methylviologen. The sequence is that of Coenzyme F420 hydrogenase subunit alpha (frhA) from Methanocaldococcus jannaschii (strain ATCC 43067 / DSM 2661 / JAL-1 / JCM 10045 / NBRC 100440) (Methanococcus jannaschii).